We begin with the raw amino-acid sequence, 203 residues long: Thymidylate kinase (203 aa).

14 to 21 is a binding site for ATP; it reads GGEGSGKS.

The protein belongs to the thymidylate kinase family.

The catalysed reaction is dTMP + ATP = dTDP + ADP. Phosphorylation of dTMP to form dTDP in both de novo and salvage pathways of dTTP synthesis. The sequence is that of Thymidylate kinase from Rickettsia canadensis (strain McKiel).